Reading from the N-terminus, the 185-residue chain is Adenine phosphoribosyltransferase (185 aa).

It belongs to the purine/pyrimidine phosphoribosyltransferase family. As to quaternary structure, homodimer.

The protein resides in the cytoplasm. It carries out the reaction AMP + diphosphate = 5-phospho-alpha-D-ribose 1-diphosphate + adenine. The protein operates within purine metabolism; AMP biosynthesis via salvage pathway; AMP from adenine: step 1/1. Catalyzes a salvage reaction resulting in the formation of AMP, that is energically less costly than de novo synthesis. The polypeptide is Adenine phosphoribosyltransferase (Nocardioides sp. (strain ATCC BAA-499 / JS614)).